The chain runs to 495 residues: MTALGITVALLVWLVTLLLISIWKHIHSSWKLPPGPFPLPIVGNIFQLDLKNIPKSFTMLAERYGPVFTVYLGSRRIVVLHGYKAVKEVLLHYKNEFSGRGEIPTFQVHKDKGVIFNNGPTWRDTRRFSLTTLRDFGMGKQGNEQRIQREAHFLLEALRKTHGQPFDPTFLIGCAPCNVISDILFRQHFDYNDKTCLRLMSMFNENFYLLSTGWIQLYNNFSGYLRYLPGSHRKLMKNISEIKDYALERVKDHRDSLEPSCPRDFTDTLLMEMEKEKYSAEPIYTLDNIAVTVADMFFAGTETTSTTLRYGLLILMKYPEVEEKLHEEIDRVIGPNRIPAIKDRLVMPYLDAVVHEIQRFIDLIPSNLPHEATRDTDFRDYIIPKGTVVIPTLDSVLYDSQEFPEPEKFKPEHFLNENGKFKYSDHFKAFSAGKRVCVGEGLARMELFLFMAAILQHFNLKSLVDPKDIDLSPIAIGFAKIPPHYKLCVIPRSQV.

298–303 lines the substrate pocket; it reads FAGTET. Heme is bound at residue cysteine 437.

This sequence belongs to the cytochrome P450 family. As to quaternary structure, interacts with chaperones HSP70 and HSP90; this interaction is required for initial targeting to mitochondria. It depends on heme as a cofactor.

It is found in the endoplasmic reticulum membrane. Its subcellular location is the microsome membrane. The protein localises to the mitochondrion inner membrane. It catalyses the reaction an organic molecule + reduced [NADPH--hemoprotein reductase] + O2 = an alcohol + oxidized [NADPH--hemoprotein reductase] + H2O + H(+). The catalysed reaction is (5Z,8Z,11Z)-eicosatrienoate + reduced [NADPH--hemoprotein reductase] + O2 = 19-hydroxy-(5Z,8Z,11Z)-eicosatrienoate + oxidized [NADPH--hemoprotein reductase] + H2O + H(+). The enzyme catalyses (5Z,8Z,11Z,14Z,17Z)-eicosapentaenoate + reduced [NADPH--hemoprotein reductase] + O2 = 19-hydroxy-(5Z,8Z,11Z,14Z,17Z)-eicosapentaenoate + oxidized [NADPH--hemoprotein reductase] + H2O + H(+). It carries out the reaction (4Z,7Z,10Z,13Z,16Z,19Z)-docosahexaenoate + reduced [NADPH--hemoprotein reductase] + O2 = 21-hydroxy-(4Z,7Z,10Z,13Z,16Z,19Z)-docosahexaenoate + oxidized [NADPH--hemoprotein reductase] + H2O + H(+). It catalyses the reaction dodecanoate + reduced [NADPH--hemoprotein reductase] + O2 = 11-hydroxydodecanoate + oxidized [NADPH--hemoprotein reductase] + H2O + H(+). The catalysed reaction is tetradecanoate + reduced [NADPH--hemoprotein reductase] + O2 = 13-hydroxytetradecanoate + oxidized [NADPH--hemoprotein reductase] + H2O + H(+). The enzyme catalyses 4-nitrophenol + NADPH + O2 + H(+) = 4-nitrocatechol + NADP(+) + H2O. It functions in the pathway lipid metabolism; fatty acid metabolism. Its activity is regulated as follows. The omega-1 hydroxylase activity is stimulated by cytochrome b5. In terms of biological role, a cytochrome P450 monooxygenase involved in the metabolism of fatty acids. Mechanistically, uses molecular oxygen inserting one oxygen atom into a substrate, and reducing the second into a water molecule, with two electrons provided by NADPH via cytochrome P450 reductase (NADPH--hemoprotein reductase). Catalyzes the hydroxylation of carbon-hydrogen bonds. Hydroxylates fatty acids specifically at the omega-1 position displaying the highest catalytic activity for saturated fatty acids. May be involved in the oxidative metabolism of xenobiotics. In Sus scrofa (Pig), this protein is Cytochrome P450 2E1 (CYP2E1).